A 493-amino-acid polypeptide reads, in one-letter code: MDIRTTTTTATDWAGDLLALGFFEDQVELSGSLAELDQKLDGILQELIAETEFKGKAGKSAIARISSKSPIRKIMILGLGKAEDFKLDTLRRTAATIARSAKKEKGKTLGISLPLWNNDPTSTTQAIAEGIELALHQDHRFKSNSEDNNDNHAPEQIQLLGLGDQTTAIERAQRICSGVILARELVAAPANVVTPVTLAETARDLAQEYGLDVEVLGQAECEALGMGAFLGVALASDLPPQFIHLTYRPSGTPRRKLAIIGKGLTFDSGGLNLKTGGSGIETMKMDMAGSAATLGAAKVVGQLKPDVEVHFIVAATENMISGRAMHPGDILTASNGKTIEVNNTDAEGRLTLADALVFAEKLGVDALVDLATLTGACIVALGDDIAGLWSSDDALAEQILQAADHSGEKLWRMPMEEKYFEGMKSQIADMKNTGPRAGGSITAALFLKQFVKETPWAHLDVAGPVWADKENGYNNAGATGYGVRTLVNWVLGS.

Positions 262 and 267 each coordinate Mn(2+). Lysine 274 is an active-site residue. Residues aspartate 286, aspartate 345, and glutamate 347 each contribute to the Mn(2+) site. Arginine 349 is a catalytic residue.

This sequence belongs to the peptidase M17 family. The cofactor is Mn(2+).

Its subcellular location is the cytoplasm. It carries out the reaction Release of an N-terminal amino acid, Xaa-|-Yaa-, in which Xaa is preferably Leu, but may be other amino acids including Pro although not Arg or Lys, and Yaa may be Pro. Amino acid amides and methyl esters are also readily hydrolyzed, but rates on arylamides are exceedingly low.. The catalysed reaction is Release of an N-terminal amino acid, preferentially leucine, but not glutamic or aspartic acids.. Presumably involved in the processing and regular turnover of intracellular proteins. Catalyzes the removal of unsubstituted N-terminal amino acids from various peptides. The sequence is that of Probable cytosol aminopeptidase from Cyanothece sp. (strain PCC 7425 / ATCC 29141).